The chain runs to 345 residues: Biotin synthase (345 aa).

The region spanning 66–293 is the Radical SAM core domain; that stretch reads NTVQLSTLLS…RAMVRLSAGR (228 aa). Residues Cys-81, Cys-85, and Cys-88 each contribute to the [4Fe-4S] cluster site. Positions 125, 156, 216, and 288 each coordinate [2Fe-2S] cluster.

It belongs to the radical SAM superfamily. Biotin synthase family. In terms of assembly, homodimer. Requires [4Fe-4S] cluster as cofactor. The cofactor is [2Fe-2S] cluster.

It catalyses the reaction (4R,5S)-dethiobiotin + (sulfur carrier)-SH + 2 reduced [2Fe-2S]-[ferredoxin] + 2 S-adenosyl-L-methionine = (sulfur carrier)-H + biotin + 2 5'-deoxyadenosine + 2 L-methionine + 2 oxidized [2Fe-2S]-[ferredoxin]. The protein operates within cofactor biosynthesis; biotin biosynthesis; biotin from 7,8-diaminononanoate: step 2/2. In terms of biological role, catalyzes the conversion of dethiobiotin (DTB) to biotin by the insertion of a sulfur atom into dethiobiotin via a radical-based mechanism. The sequence is that of Biotin synthase from Cupriavidus metallidurans (strain ATCC 43123 / DSM 2839 / NBRC 102507 / CH34) (Ralstonia metallidurans).